A 507-amino-acid polypeptide reads, in one-letter code: FSD1-like protein (507 aa).

Positions 70-109 (KQEQVRKSQELQSQLSQCNNALENSEELLEFATRSLDIKE) form a coiled coil. The 58-residue stretch at 105–162 (LDIKEPEEFSKAARQIKDRVTMASAFRLSLKPKVSDNMTHLMVDFSQERQMLQTLKFL) folds into the COS domain. The region spanning 164-268 (VPKAPEIDPV…DPVTLETRAL (105 aa)) is the Fibronectin type-III domain. The B30.2/SPRY domain occupies 291 to 484 (DPTGGKGQES…LSTGMQVPSA (194 aa)). A disordered region spans residues 292–345 (PTGGKGQESKIKGKENKGSVHVTSLKKHTSGTPSPKRTSVGSRPPAVRGSRDRF). Residues 298–309 (QESKIKGKENKG) are compositionally biased toward basic and acidic residues. Positions 321–332 (SGTPSPKRTSVG) are enriched in polar residues. Phosphoserine occurs at positions 498 and 501.

In Mus musculus (Mouse), this protein is FSD1-like protein (Fsd1l).